We begin with the raw amino-acid sequence, 794 residues long: Solute carrier family 26 member 9 (794 aa).

Residues 1–70 (MNKVRPRYII…WLPKYNIKGN (70 aa)) are Cytoplasmic-facing. A helical transmembrane segment spans residues 71–96 (LLNDALGGISAGTIQIPQGMAFALLA). Over 97–100 (NLPP) the chain is Extracellular. A helical transmembrane segment spans residues 101–109 (VNGLYSSFF). The Cytoplasmic portion of the chain corresponds to 110-129 (PLVVYFFMGGIPQMVPGTFA). The helical transmembrane segment at 130 to 142 (VISIIVGNVCLKL) threads the bilayer. Over 143-160 (APESHFQNVTSNGTITNI) the chain is Extracellular. The chain crosses the membrane as a helical span at residues 161–189 (EAMNTARMHISATLACLTAIIQIALSFVQ). At 190 to 199 (FGFVAIYLSE) the chain is on the cytoplasmic side. A helical transmembrane segment spans residues 200–222 (SFIRGFMTAAGLQILISVLKYIF). Residues 223–235 (GVSIPPYSGVLAI) are Extracellular-facing. The helical intramembrane region spans 236 to 244 (IYTFIDICK). Residues 245-252 (ELPKTNVA) lie on the Extracellular side of the membrane. Residues 253-273 (SLIFALISTVLLIIVKELNMK) traverse the membrane as a helical segment. Topologically, residues 274-284 (FMHKIRFPIPM) are cytoplasmic. A helical membrane pass occupies residues 285 to 297 (EIIIVIVATAVSG). The Extracellular segment spans residues 298 to 332 (SFKLPERYHMNVVGHIPLGFPSPTVPNVTQWDEMV). Residues 333–356 (GTAFSLAIVGYVINLAMGRTLGAK) traverse the membrane as a helical segment. At 357–363 (HGFDVDA) the chain is on the cytoplasmic side. Residues 364–377 (NQEMLALGSGNFFG) form a helical membrane-spanning segment. Residues 378-388 (SFFFIHVICCA) are Extracellular-facing. Residues 389–398 (LSVTLAVDGA) traverse the membrane as a helical segment. Over 399–403 (GGKSQ) the chain is Cytoplasmic. Residues 404–417 (IASFFVMMSVMVTI) traverse the membrane as a helical segment. The Extracellular segment spans residues 418 to 429 (LALGTYLNPLPK). A helical membrane pass occupies residues 430–455 (SVLGALIAVNLKNSLKQLSDPFYLWK). Topologically, residues 456–459 (KSKL) are cytoplasmic. The helical transmembrane segment at 460–474 (DCLVWLVSFFSTFIL) threads the bilayer. At 475–477 (GLP) the chain is on the extracellular side. Residues 478–496 (YGLAVGVAFSILVVIFNTQ) form a helical membrane-spanning segment. The Cytoplasmic portion of the chain corresponds to 497–794 (FRNGSSLNQV…MFQTEIQTAL (298 aa)). In terms of domain architecture, STAS spans 517–739 (VYSKVQPIDG…ITVHDAVLYA (223 aa)).

It belongs to the SLC26A/SulP transporter (TC 2.A.53) family. As to quaternary structure, homodimer.

The protein resides in the cell membrane. It localises to the endomembrane system. It catalyses the reaction chloride(in) = chloride(out). The catalysed reaction is hydrogencarbonate(in) + chloride(out) = hydrogencarbonate(out) + chloride(in). Inhibited by ammonium and thiosulfate. Its function is as follows. Ion transporter that can act both as an ion channel and anion exchanger. Mainly acts as a chloride channel, which mediate uncoupled chloride anion transport in an alternate-access mechanism where a saturable binding site is alternately exposed to either one or the other side of the membrane. Also acts as a DIDS- and thiosulfate- sensitive anion exchanger the exchange of chloride for bicarbonate ions across the cell membrane. This is Solute carrier family 26 member 9 (slc26a9) from Xenopus tropicalis (Western clawed frog).